The chain runs to 229 residues: Enolase-phosphatase E1 (229 aa).

It belongs to the HAD-like hydrolase superfamily. MasA/MtnC family. Monomer. Requires Mg(2+) as cofactor.

It catalyses the reaction 5-methylsulfanyl-2,3-dioxopentyl phosphate + H2O = 1,2-dihydroxy-5-(methylsulfanyl)pent-1-en-3-one + phosphate. Its pathway is amino-acid biosynthesis; L-methionine biosynthesis via salvage pathway; L-methionine from S-methyl-5-thio-alpha-D-ribose 1-phosphate: step 3/6. It functions in the pathway amino-acid biosynthesis; L-methionine biosynthesis via salvage pathway; L-methionine from S-methyl-5-thio-alpha-D-ribose 1-phosphate: step 4/6. Functionally, bifunctional enzyme that catalyzes the enolization of 2,3-diketo-5-methylthiopentyl-1-phosphate (DK-MTP-1-P) into the intermediate 2-hydroxy-3-keto-5-methylthiopentenyl-1-phosphate (HK-MTPenyl-1-P), which is then dephosphorylated to form the acireductone 1,2-dihydroxy-3-keto-5-methylthiopentene (DHK-MTPene). This chain is Enolase-phosphatase E1, found in Yersinia pseudotuberculosis serotype O:1b (strain IP 31758).